The primary structure comprises 209 residues: Cytidylate kinase (209 aa).

7–15 (GPAASGKGT) lines the ATP pocket.

Belongs to the cytidylate kinase family. Type 1 subfamily.

It localises to the cytoplasm. The catalysed reaction is CMP + ATP = CDP + ADP. It carries out the reaction dCMP + ATP = dCDP + ADP. This Afipia carboxidovorans (strain ATCC 49405 / DSM 1227 / KCTC 32145 / OM5) (Oligotropha carboxidovorans) protein is Cytidylate kinase.